The primary structure comprises 64 residues: DNA gyrase inhibitor YacG (64 aa).

Zn(2+) contacts are provided by C10, C13, C29, and C33.

The protein belongs to the DNA gyrase inhibitor YacG family. Interacts with GyrB. It depends on Zn(2+) as a cofactor.

In terms of biological role, inhibits all the catalytic activities of DNA gyrase by preventing its interaction with DNA. Acts by binding directly to the C-terminal domain of GyrB, which probably disrupts DNA binding by the gyrase. This Pectobacterium carotovorum subsp. carotovorum (strain PC1) protein is DNA gyrase inhibitor YacG.